We begin with the raw amino-acid sequence, 493 residues long: Glycerol kinase (493 aa).

Thr-12 is a binding site for ADP. 3 residues coordinate ATP: Thr-12, Thr-13, and Ser-14. Residue Thr-12 participates in sn-glycerol 3-phosphate binding. Arg-16 contacts ADP. 4 residues coordinate sn-glycerol 3-phosphate: Arg-82, Glu-83, Tyr-132, and Asp-239. Glycerol is bound by residues Arg-82, Glu-83, Tyr-132, Asp-239, and Gln-240. 2 residues coordinate ADP: Thr-261 and Gly-303. ATP contacts are provided by Thr-261, Gly-303, Gln-307, and Gly-402. ADP is bound by residues Gly-402 and Asn-406.

This sequence belongs to the FGGY kinase family.

It catalyses the reaction glycerol + ATP = sn-glycerol 3-phosphate + ADP + H(+). It functions in the pathway polyol metabolism; glycerol degradation via glycerol kinase pathway; sn-glycerol 3-phosphate from glycerol: step 1/1. Key enzyme in the regulation of glycerol uptake and metabolism. Catalyzes the phosphorylation of glycerol to yield sn-glycerol 3-phosphate. In Thermococcus gammatolerans (strain DSM 15229 / JCM 11827 / EJ3), this protein is Glycerol kinase.